A 415-amino-acid polypeptide reads, in one-letter code: Actin-like protein 7B (415 aa).

Residues M1–R31 form a disordered region. S6 bears the Phosphoserine mark.

The protein belongs to the actin family. In terms of tissue distribution, detected only in the testis and, to a lesser extent, in the prostate.

It is found in the cytoplasm. It localises to the cytoskeleton. The protein is Actin-like protein 7B (ACTL7B) of Homo sapiens (Human).